Here is a 174-residue protein sequence, read N- to C-terminus: Protein GrpE (174 aa).

This sequence belongs to the GrpE family. Homodimer.

The protein resides in the cytoplasm. Its function is as follows. Participates actively in the response to hyperosmotic and heat shock by preventing the aggregation of stress-denatured proteins, in association with DnaK and GrpE. It is the nucleotide exchange factor for DnaK and may function as a thermosensor. Unfolded proteins bind initially to DnaJ; upon interaction with the DnaJ-bound protein, DnaK hydrolyzes its bound ATP, resulting in the formation of a stable complex. GrpE releases ADP from DnaK; ATP binding to DnaK triggers the release of the substrate protein, thus completing the reaction cycle. Several rounds of ATP-dependent interactions between DnaJ, DnaK and GrpE are required for fully efficient folding. The chain is Protein GrpE from Pseudothermotoga lettingae (strain ATCC BAA-301 / DSM 14385 / NBRC 107922 / TMO) (Thermotoga lettingae).